The chain runs to 523 residues: NEDD8-activating enzyme E1 regulatory subunit AXL (523 aa).

The protein belongs to the ubiquitin-activating E1 family. ULA1 subfamily. Heterodimer of ECR1 and AXL1. The complex binds to RUB1/NEDD8 and RCE1.

The protein resides in the nucleus. Its pathway is protein modification; protein neddylation. In terms of biological role, regulatory subunit of the dimeric ECR1-AXL1 E1 enzyme. E1 activates RUB1/NEDD8 by first adenylating its C-terminal glycine residue with ATP, thereafter linking this residue to the side chain of the catalytic cysteine, yielding a RUB1-ECR1 thioester and free AMP. E1 finally transfers RUB1 to the catalytic cysteine of RCE1. May function redundantly with AXR1 in the RUB conjugating pathway. Seems not to be functionally equivalent to AXR1 in vivo. This Arabidopsis thaliana (Mouse-ear cress) protein is NEDD8-activating enzyme E1 regulatory subunit AXL.